Here is a 273-residue protein sequence, read N- to C-terminus: NAD-dependent protein deacylase (273 aa).

The region spanning 20–272 (RERLRQRIFF…PEFVEKLLKG (253 aa)) is the Deacetylase sirtuin-type domain. 48 to 67 (GAGISAESGIRTFRAADGLW) provides a ligand contact to NAD(+). The substrate site is built by Tyr-92 and Arg-95. Residue 129 to 132 (QNID) coordinates NAD(+). Residue His-147 is the Proton acceptor of the active site. Zn(2+) contacts are provided by Cys-155 and Cys-174. Residues 214 to 216 (GTS), 240 to 242 (NLE), and Ala-258 contribute to the NAD(+) site.

Belongs to the sirtuin family. Class III subfamily. The cofactor is Zn(2+).

Its subcellular location is the cytoplasm. It carries out the reaction N(6)-acetyl-L-lysyl-[protein] + NAD(+) + H2O = 2''-O-acetyl-ADP-D-ribose + nicotinamide + L-lysyl-[protein]. The catalysed reaction is N(6)-succinyl-L-lysyl-[protein] + NAD(+) + H2O = 2''-O-succinyl-ADP-D-ribose + nicotinamide + L-lysyl-[protein]. The enzyme catalyses N(6)-(2-hydroxyisobutanoyl)-L-lysyl-[protein] + NAD(+) + H2O = 2''-O-(2-hydroxyisobutanoyl)-ADP-D-ribose + nicotinamide + L-lysyl-[protein]. In terms of biological role, NAD-dependent lysine deacetylase that specifically removes acetyl groups on target proteins. Also acts as a protein-lysine deacylase by mediating protein desuccinylation and de-2-hydroxyisobutyrylation. Modulates the activities of several proteins which are inactive in their acylated form. In Escherichia coli O157:H7, this protein is NAD-dependent protein deacylase.